The chain runs to 61 residues: Ferredoxin-2 (61 aa).

4Fe-4S ferredoxin-type domains are found at residues His-2–Asp-27 and Glu-28–Val-61. [4Fe-4S] cluster-binding residues include Cys-8, Cys-11, Cys-14, Cys-18, Cys-37, Cys-40, Cys-49, and Cys-53.

Requires [4Fe-4S] cluster as cofactor.

Functionally, ferredoxins are iron-sulfur proteins that transfer electrons in a wide variety of metabolic reactions. The sequence is that of Ferredoxin-2 from Chlorobium limicola.